Here is a 478-residue protein sequence, read N- to C-terminus: Catalase (478 aa).

Residues 1–23 (MTNQLTTNEGQPWADNQHSQTAG) are disordered. Catalysis depends on residues histidine 53 and asparagine 126. Tyrosine 336 contacts heme.

It belongs to the catalase family. Requires heme as cofactor.

It is found in the cytoplasm. The enzyme catalyses 2 H2O2 = O2 + 2 H2O. In terms of biological role, decomposes hydrogen peroxide into water and oxygen; serves to protect cells from the toxic effects of hydrogen peroxide. The sequence is that of Catalase (katA) from Latilactobacillus sakei (Lactobacillus sakei).